A 124-amino-acid chain; its full sequence is Ribosome-binding factor A (124 aa).

It belongs to the RbfA family. As to quaternary structure, monomer. Binds 30S ribosomal subunits, but not 50S ribosomal subunits or 70S ribosomes.

Its subcellular location is the cytoplasm. Its function is as follows. One of several proteins that assist in the late maturation steps of the functional core of the 30S ribosomal subunit. Associates with free 30S ribosomal subunits (but not with 30S subunits that are part of 70S ribosomes or polysomes). Required for efficient processing of 16S rRNA. May interact with the 5'-terminal helix region of 16S rRNA. The sequence is that of Ribosome-binding factor A from Thiobacillus denitrificans (strain ATCC 25259 / T1).